The sequence spans 113 residues: Hydrogenase maturation factor HypA (113 aa).

H2 contacts Ni(2+). C73, C76, C89, and C92 together coordinate Zn(2+).

The protein belongs to the HypA/HybF family.

Functionally, involved in the maturation of [NiFe] hydrogenases. Required for nickel insertion into the metal center of the hydrogenase. In Chlorobium phaeobacteroides (strain BS1), this protein is Hydrogenase maturation factor HypA.